The chain runs to 137 residues: Large ribosomal subunit protein bL12 (137 aa).

Belongs to the bacterial ribosomal protein bL12 family. In terms of assembly, homodimer. Part of the ribosomal stalk of the 50S ribosomal subunit. Forms a multimeric L10(L12)X complex, where L10 forms an elongated spine to which 2 to 4 L12 dimers bind in a sequential fashion. Binds GTP-bound translation factors.

In terms of biological role, forms part of the ribosomal stalk which helps the ribosome interact with GTP-bound translation factors. Is thus essential for accurate translation. The polypeptide is Large ribosomal subunit protein bL12 (Gloeobacter violaceus (strain ATCC 29082 / PCC 7421)).